We begin with the raw amino-acid sequence, 94 residues long: MSTPKKDKNNKEVDKTDVKTPVKVRRAKKKICAFCVDKVERIDYKDVAKLKKYISERGKILPRRISGNCAKHQRQLTVAIKRARHIALLPYTAD.

The protein belongs to the bacterial ribosomal protein bS18 family. As to quaternary structure, part of the 30S ribosomal subunit. Forms a tight heterodimer with protein bS6.

In terms of biological role, binds as a heterodimer with protein bS6 to the central domain of the 16S rRNA, where it helps stabilize the platform of the 30S subunit. The chain is Small ribosomal subunit protein bS18 from Acetivibrio thermocellus (strain ATCC 27405 / DSM 1237 / JCM 9322 / NBRC 103400 / NCIMB 10682 / NRRL B-4536 / VPI 7372) (Clostridium thermocellum).